Here is a 596-residue protein sequence, read N- to C-terminus: Elongation factor 4 (596 aa).

Residues 2-184 (KHIRNFSIIA…VIVEQIPPPE (183 aa)) enclose the tr-type G domain. GTP contacts are provided by residues 14 to 19 (DHGKST) and 131 to 134 (NKID).

It belongs to the TRAFAC class translation factor GTPase superfamily. Classic translation factor GTPase family. LepA subfamily.

It localises to the cell inner membrane. The enzyme catalyses GTP + H2O = GDP + phosphate + H(+). Functionally, required for accurate and efficient protein synthesis under certain stress conditions. May act as a fidelity factor of the translation reaction, by catalyzing a one-codon backward translocation of tRNAs on improperly translocated ribosomes. Back-translocation proceeds from a post-translocation (POST) complex to a pre-translocation (PRE) complex, thus giving elongation factor G a second chance to translocate the tRNAs correctly. Binds to ribosomes in a GTP-dependent manner. The polypeptide is Elongation factor 4 (Shewanella sp. (strain MR-7)).